Here is a 69-residue protein sequence, read N- to C-terminus: Large ribosomal subunit protein uL29 (69 aa).

Belongs to the universal ribosomal protein uL29 family.

The protein is Large ribosomal subunit protein uL29 of Staphylococcus aureus (strain Mu3 / ATCC 700698).